The chain runs to 150 residues: Ribosome-binding factor A (150 aa).

The tract at residues 126-150 (EVARDLSHDDDEDGGADEAPRNGDE) is disordered.

Belongs to the RbfA family. In terms of assembly, monomer. Binds 30S ribosomal subunits, but not 50S ribosomal subunits or 70S ribosomes.

Its subcellular location is the cytoplasm. Its function is as follows. One of several proteins that assist in the late maturation steps of the functional core of the 30S ribosomal subunit. Associates with free 30S ribosomal subunits (but not with 30S subunits that are part of 70S ribosomes or polysomes). Required for efficient processing of 16S rRNA. May interact with the 5'-terminal helix region of 16S rRNA. This Brucella suis (strain ATCC 23445 / NCTC 10510) protein is Ribosome-binding factor A.